The sequence spans 431 residues: MASSMLTKQFLGAPFSSFGSGQQPSKLCSSNLRFPTHRSQPKRLEIQAAGNTFGNYFRVTTFGESHGGGVGCIIDGCPPRLPLSESDMQVELDRRRPGQSRITTPRKETDTCKISSGTADGLTTGSPIKVEVPNTDQRGNDYSEMSLAYRPSHADATYDFKYGVRSVQGGGRSSARETIGRVAAGAVAKKILKLYSGTEILAYVSQVHNVVLPEDLVDNQIVTLEQIESNIVRCPNPEYAEKMIGAIDYVRVRGDSVGGVVTCIVRNVPRGLGTPVFDKLEAELAKACMSLPATKGFEFGSGFAGTFMTGSEHNDEFFMDEHDQIRTKTNRSGGIQGGISNGEIINMRVAFKPTSTIARKQHTVSRDKHETELIARGRHDPCVVPRAVPMVEAMVALVLVDQLMTQYAQCMLFPVNLTLQEPLQPSTTKSA.

Residues 1-48 (MASSMLTKQFLGAPFSSFGSGQQPSKLCSSNLRFPTHRSQPKRLEIQA) constitute a chloroplast transit peptide. The tract at residues 93–141 (DRRRPGQSRITTPRKETDTCKISSGTADGLTTGSPIKVEVPNTDQRGND) is disordered. The segment covering 112–126 (CKISSGTADGLTTGS) has biased composition (polar residues).

It belongs to the chorismate synthase family. In terms of assembly, homotetramer. Requires FMNH2 as cofactor. Predominantly expressed in flowers and roots and, to a lesser extent, in stems, leaves, and cotyledons.

It is found in the plastid. The protein resides in the chloroplast. It catalyses the reaction 5-O-(1-carboxyvinyl)-3-phosphoshikimate = chorismate + phosphate. It functions in the pathway metabolic intermediate biosynthesis; chorismate biosynthesis; chorismate from D-erythrose 4-phosphate and phosphoenolpyruvate: step 7/7. Catalyzes the last common step of the biosynthesis of aromatic amino acids, produced via the shikimic acid pathway. This is Chorismate synthase 2, chloroplastic (CS2) from Solanum lycopersicum (Tomato).